The following is a 280-amino-acid chain: Urease accessory protein UreD (280 aa).

The protein belongs to the UreD family. In terms of assembly, ureD, UreF and UreG form a complex that acts as a GTP-hydrolysis-dependent molecular chaperone, activating the urease apoprotein by helping to assemble the nickel containing metallocenter of UreC. The UreE protein probably delivers the nickel.

It localises to the cytoplasm. Required for maturation of urease via the functional incorporation of the urease nickel metallocenter. The sequence is that of Urease accessory protein UreD from Pseudomonas aeruginosa (strain ATCC 15692 / DSM 22644 / CIP 104116 / JCM 14847 / LMG 12228 / 1C / PRS 101 / PAO1).